A 205-amino-acid polypeptide reads, in one-letter code: Methylthioribulose-1-phosphate dehydratase (205 aa).

His-95 and His-97 together coordinate Zn(2+).

Belongs to the aldolase class II family. MtnB subfamily. Requires Zn(2+) as cofactor.

It carries out the reaction 5-(methylsulfanyl)-D-ribulose 1-phosphate = 5-methylsulfanyl-2,3-dioxopentyl phosphate + H2O. It functions in the pathway amino-acid biosynthesis; L-methionine biosynthesis via salvage pathway; L-methionine from S-methyl-5-thio-alpha-D-ribose 1-phosphate: step 2/6. Catalyzes the dehydration of methylthioribulose-1-phosphate (MTRu-1-P) into 2,3-diketo-5-methylthiopentyl-1-phosphate (DK-MTP-1-P). This Microcystis aeruginosa (strain NIES-843 / IAM M-2473) protein is Methylthioribulose-1-phosphate dehydratase.